Consider the following 150-residue polypeptide: 3-hydroxyacyl-[acyl-carrier-protein] dehydratase FabZ (150 aa).

The active site involves H57.

Belongs to the thioester dehydratase family. FabZ subfamily.

It is found in the cytoplasm. It catalyses the reaction a (3R)-hydroxyacyl-[ACP] = a (2E)-enoyl-[ACP] + H2O. In terms of biological role, involved in unsaturated fatty acids biosynthesis. Catalyzes the dehydration of short chain beta-hydroxyacyl-ACPs and long chain saturated and unsaturated beta-hydroxyacyl-ACPs. The chain is 3-hydroxyacyl-[acyl-carrier-protein] dehydratase FabZ from Actinobacillus succinogenes (strain ATCC 55618 / DSM 22257 / CCUG 43843 / 130Z).